Consider the following 295-residue polypeptide: Xyloglucan endotransglucosylase/hydrolase (295 aa).

Positions 1-23 (MAVSSTPWALVALFLMASSTVMA) are cleaved as a signal peptide. One can recognise a GH16 domain in the interval 25-222 (PPRKAIDVPF…WANAPFIASY (198 aa)). Residue Glu-108 is the Nucleophile of the active site. Glu-112 acts as the Proton donor in catalysis. Glu-112 lines the xyloglucan pocket. The N-linked (GlcNAc...) asparagine glycan is linked to Asn-116. Residues 125–127 (QTN), 135–137 (NRE), 201–202 (DW), and Gly-206 each bind xyloglucan. Cystine bridges form between Cys-230/Cys-239 and Cys-276/Cys-289. Arg-281 serves as a coordination point for xyloglucan.

This sequence belongs to the glycosyl hydrolase 16 family. XTH group 1 subfamily. Contains at least one intrachain disulfide bond essential for its enzymatic activity. In terms of processing, the N-glycan consists of an (GlcNAc)2(Hex)6 oligosaccharide; not essential for its enzymatic activity.

The protein localises to the secreted. The protein resides in the cell wall. It localises to the extracellular space. It is found in the apoplast. The enzyme catalyses breaks a beta-(1-&gt;4) bond in the backbone of a xyloglucan and transfers the xyloglucanyl segment on to O-4 of the non-reducing terminal glucose residue of an acceptor, which can be a xyloglucan or an oligosaccharide of xyloglucan.. Its function is as follows. Catalyzes xyloglucan endohydrolysis (XEH) and/or endotransglycosylation (XET). Cleaves and religates xyloglucan polymers, an essential constituent of the primary cell wall, and thereby participates in cell wall construction of growing tissues. The chain is Xyloglucan endotransglucosylase/hydrolase (XET16A) from Brassica oleracea var. botrytis (Cauliflower).